The sequence spans 318 residues: UAP56-interacting factor (318 aa).

Met-1 carries the post-translational modification N-acetylmethionine. The interval 1–27 (MNRFSTRLMGATATPPPAPPKARSNEN) is disordered. Residue Thr-14 is modified to Phosphothreonine. Ser-24 carries the post-translational modification Phosphoserine. A UAP56-binding motif motif is present at residues 27–45 (NLDKIDMSLDDIIKLNRKE). A phosphoserine mark is found at Ser-61 and Ser-118. Lys-140 is covalently cross-linked (Glycyl lysine isopeptide (Lys-Gly) (interchain with G-Cter in SUMO1)). The span at 163–180 (LNRKNNIPNNFTRSGNKL) shows a compositional bias: polar residues. The interval 163–183 (LNRKNNIPNNFTRSGNKLSHQ) is disordered. Lys-261 is covalently cross-linked (Glycyl lysine isopeptide (Lys-Gly) (interchain with G-Cter in SUMO2)).

Belongs to the UIF family. Interacts with DDX39B/UAP56 and NXF1; interaction with DDX39B/UAP56 and NXF1 are mutually exclusive. Interacts with SSRP1; required for its recruitment to mRNAs. Interacts with CHTOP.

The protein resides in the nucleus. It localises to the nucleoplasm. Its subcellular location is the nucleus speckle. Its function is as follows. Required for mRNA export from the nucleus to the cytoplasm. Acts as an adapter that uses the DDX39B/UAP56-NFX1 pathway to ensure efficient mRNA export and delivering to the nuclear pore. Associates with spliced and unspliced mRNAs simultaneously with ALYREF/THOC4. The polypeptide is UAP56-interacting factor (FYTTD1) (Bos taurus (Bovine)).